Here is a 339-residue protein sequence, read N- to C-terminus: MKPYPIDLVSVVIPVYNEEASLPELLRRTEAACRSLGRAFEIVLVDDGSRDRSAELLQAAAERDGCAVVAVILNRNYGQHAAILAGFEQSRGDLVITLDADLQNPPEEIPRLVERAAQGYDVVGSIRDNRRDSAWRRWPSRLVNLAVQRSTGVAMHDYGCMLRAYRRSIVEAMLACRERSTFIPILANGFARHTCEIRVAHAERAHGESKYSAMRLLNLMFDLVTCMTTTPLRLLSLVGGGMALAGFLFALFLLVLRLAFGAAWAGNGLFVLFAVLFMFSGVQLLGMGLLGEYLGRMYSDVRARPRFFIERVVRAAPSALPSALQRAGFTSSSSEPSTP.

A run of 2 helical transmembrane segments spans residues L235–V255 and L269–L289.

Belongs to the glycosyltransferase 2 family.

It is found in the cell inner membrane. The enzyme catalyses UDP-4-deoxy-4-formamido-beta-L-arabinose + di-trans,octa-cis-undecaprenyl phosphate = 4-deoxy-4-formamido-alpha-L-arabinopyranosyl di-trans,octa-cis-undecaprenyl phosphate + UDP. Its pathway is glycolipid biosynthesis; 4-amino-4-deoxy-alpha-L-arabinose undecaprenyl phosphate biosynthesis; 4-amino-4-deoxy-alpha-L-arabinose undecaprenyl phosphate from UDP-4-deoxy-4-formamido-beta-L-arabinose and undecaprenyl phosphate: step 1/2. It participates in bacterial outer membrane biogenesis; lipopolysaccharide biosynthesis. In terms of biological role, catalyzes the transfer of 4-deoxy-4-formamido-L-arabinose from UDP to undecaprenyl phosphate. The modified arabinose is attached to lipid A and is required for resistance to polymyxin and cationic antimicrobial peptides. The sequence is that of Undecaprenyl-phosphate 4-deoxy-4-formamido-L-arabinose transferase from Pseudomonas paraeruginosa (strain DSM 24068 / PA7) (Pseudomonas aeruginosa (strain PA7)).